The primary structure comprises 66 residues: Phylloseptin-S2 (66 aa).

An N-terminal signal peptide occupies residues 1 to 22 (MAFLKKSLFLVLFLGLVSLSIC). The propeptide occupies 23-46 (EEEKRETEEEEHDQEEDDKSEEKR). The segment at 25 to 44 (EKRETEEEEHDQEEDDKSEE) is disordered. Positions 30–41 (EEEEHDQEEDDK) are enriched in acidic residues. Phe65 is modified (phenylalanine amide).

In terms of tissue distribution, expressed by the skin glands.

Its subcellular location is the secreted. It localises to the target cell membrane. Antimicrobial peptide with high activity against Gram-positive bacteria, moderate activity against Gram-negative bacteria, and moderate activity against fungi. Acts by causing bacterial membrane disruption inducing leakage of the intracellular content followed by cell death. It adopts an alpha-helical amphipathic structure in membrane environments. Also shows highly potent antiparasitic activity against Leishmania species. Shows moderate hemolytic activity on human erythrocytes (LC(50)=25 uM). Is also active on human monocytes (IC(50)=22.5 uM). The polypeptide is Phylloseptin-S2 (Phyllomedusa sauvagei (Sauvage's leaf frog)).